Here is an 897-residue protein sequence, read N- to C-terminus: uncharacterized protein (897 aa).

2 disordered regions span residues 25-89 and 106-168; these read RLQD…TRKR and PTRL…TPPS. Composition is skewed to low complexity over residues 32 to 44, 57 to 68, and 106 to 142; these read SSSP…SSSS, SLQNSQSSSYSL, and PTRL…SSVS. One can recognise a Helicase ATP-binding domain in the interval 263–446; that stretch reads SMEQSSKCGG…YSLLKFLRIK (184 aa). Residue 276-283 coordinates ATP; sequence DDMGLGKT. Positions 397-400 match the DEAH box motif; that stretch reads DEAH. The RING-type zinc finger occupies 606 to 655; it reads CSVCLDPCLAPVFIIPCGHFTCQECMSMLVGQKYGSSSTSTIIAKCPMCR. One can recognise a Helicase C-terminal domain in the interval 727–890; sequence QARQTILDII…LSRLDKEELL (164 aa).

This sequence belongs to the SNF2/RAD54 helicase family.

The protein resides in the cytoplasm. Its subcellular location is the nucleus. This is an uncharacterized protein from Schizosaccharomyces pombe (strain 972 / ATCC 24843) (Fission yeast).